Consider the following 91-residue polypeptide: Em-like protein (91 aa).

Basic and acidic residues-rich tracts occupy residues 1–18 (MEQQ…REGE) and 31–51 (DAQE…KEQI). Residues 1–91 (MEQQQDRREL…PIDESKYRHP (91 aa)) form a disordered region. Residues 62-73 (KGGLSSAGGPGG) are compositionally biased toward gly residues. A compositionally biased stretch (basic and acidic residues) spans 75-91 (RASEEGRPIDESKYRHP).

This sequence belongs to the small hydrophilic plant seed protein family.

The polypeptide is Em-like protein (Picea glauca (White spruce)).